Here is a 286-residue protein sequence, read N- to C-terminus: 4-hydroxybenzoate octaprenyltransferase (286 aa).

Transmembrane regions (helical) follow at residues 21 to 40, 95 to 115, 142 to 162, 167 to 187, 210 to 230, 235 to 255, and 266 to 286; these read GTLL…AGGM, ILFV…NGLV, FLGI…TGEV, WWLF…YAMV, QIIG…GWSA, LYGL…MLIF, and FLNN…DYLI.

It belongs to the UbiA prenyltransferase family. The cofactor is Mg(2+).

The protein resides in the cell inner membrane. It catalyses the reaction all-trans-octaprenyl diphosphate + 4-hydroxybenzoate = 4-hydroxy-3-(all-trans-octaprenyl)benzoate + diphosphate. It functions in the pathway cofactor biosynthesis; ubiquinone biosynthesis. In terms of biological role, catalyzes the prenylation of para-hydroxybenzoate (PHB) with an all-trans polyprenyl group. Mediates the second step in the final reaction sequence of ubiquinone-8 (UQ-8) biosynthesis, which is the condensation of the polyisoprenoid side chain with PHB, generating the first membrane-bound Q intermediate 3-octaprenyl-4-hydroxybenzoate. The sequence is that of 4-hydroxybenzoate octaprenyltransferase from Shewanella baltica (strain OS185).